We begin with the raw amino-acid sequence, 309 residues long: Pantothenate synthetase (309 aa).

Thr-2 carries the post-translational modification N-acetylthreonine. 40–47 (MGALHEGH) is a binding site for ATP. The Proton donor role is filled by His-47. Gln-72 lines the (R)-pantoate pocket. Gln-72 lines the beta-alanine pocket. Residues Asp-88, Asp-89, and Gln-92 each contribute to the Mg(2+) site. Position 158–161 (158–161 (GEKD)) interacts with ATP. Gln-164 contacts (R)-pantoate. ATP-binding positions include Val-187 and 195-198 (MSSR).

This sequence belongs to the pantothenate synthetase family.

It localises to the cytoplasm. The catalysed reaction is (R)-pantoate + beta-alanine + ATP = (R)-pantothenate + AMP + diphosphate + H(+). Its pathway is cofactor biosynthesis; (R)-pantothenate biosynthesis; (R)-pantothenate from (R)-pantoate and beta-alanine: step 1/1. With respect to regulation, pantothenate exhibits uncompetitive inhibition toward both D-pantoate and ATP, and non-competitive inhibition toward beta-alanine. AMPCPP exhibits competitive inhibition toward ATP, uncompetitive inhibition toward beta-alanine, and non-competitive inhibition toward D-pantoate. The enzyme is most active in the presence of magnesium or manganese. Other divalent cations (cobalt, nickel, zinc) are less effective. Catalyzes the condensation of pantoate with beta-alanine in an ATP-dependent reaction via a pantoyl-adenylate intermediate. The protein is Pantothenate synthetase (panC) of Mycobacterium tuberculosis (strain ATCC 25618 / H37Rv).